We begin with the raw amino-acid sequence, 32 residues long: uncharacterized protein (32 aa).

This is an uncharacterized protein from Ornithodoros (relapsing fever ticks).